A 331-amino-acid polypeptide reads, in one-letter code: Ketol-acid reductoisomerase (NADP(+)) (331 aa).

The KARI N-terminal Rossmann domain maps to 2-182 (AQLFYDTDAD…GGTRAGILET (181 aa)). Residues 25–28 (YGSQ), Ser51, Ser53, and 83–86 (DEFQ) contribute to the NADP(+) site. His108 is an active-site residue. Gly134 provides a ligand contact to NADP(+). A KARI C-terminal knotted domain is found at 183–328 (NFKEETETDL…KGLRSMFSWL (146 aa)). Positions 191, 195, 227, and 231 each coordinate Mg(2+). Position 252 (Ser252) interacts with substrate.

It belongs to the ketol-acid reductoisomerase family. The cofactor is Mg(2+).

It catalyses the reaction (2R)-2,3-dihydroxy-3-methylbutanoate + NADP(+) = (2S)-2-acetolactate + NADPH + H(+). The catalysed reaction is (2R,3R)-2,3-dihydroxy-3-methylpentanoate + NADP(+) = (S)-2-ethyl-2-hydroxy-3-oxobutanoate + NADPH + H(+). The protein operates within amino-acid biosynthesis; L-isoleucine biosynthesis; L-isoleucine from 2-oxobutanoate: step 2/4. It participates in amino-acid biosynthesis; L-valine biosynthesis; L-valine from pyruvate: step 2/4. Involved in the biosynthesis of branched-chain amino acids (BCAA). Catalyzes an alkyl-migration followed by a ketol-acid reduction of (S)-2-acetolactate (S2AL) to yield (R)-2,3-dihydroxy-isovalerate. In the isomerase reaction, S2AL is rearranged via a Mg-dependent methyl migration to produce 3-hydroxy-3-methyl-2-ketobutyrate (HMKB). In the reductase reaction, this 2-ketoacid undergoes a metal-dependent reduction by NADPH to yield (R)-2,3-dihydroxy-isovalerate. The polypeptide is Ketol-acid reductoisomerase (NADP(+)) (Synechococcus sp. (strain WH7803)).